A 192-amino-acid chain; its full sequence is Ion-translocating oxidoreductase complex subunit B (192 aa).

A hydrophobic region spans residues 1-26 (MNTIWIAVGALTLLGLVFGAILGYAS). The region spanning 32 to 91 (EDDPVVEKIDAILPQSQCGQCGYPGCRPYAEAVGLQGEKINRCAPGGEAVMLKMAELLNV) is the 4Fe-4S domain. [4Fe-4S] cluster-binding residues include cysteine 49, cysteine 52, cysteine 57, cysteine 74, cysteine 117, cysteine 120, cysteine 123, cysteine 127, cysteine 147, cysteine 150, cysteine 153, and cysteine 157. 4Fe-4S ferredoxin-type domains lie at 108-137 (MLAVIDENNCIGCTKCIQACPVDAIVGATR) and 138-167 (AMHTVMSDLCTGCNLCVDPCPTHCIELRPV).

It belongs to the 4Fe4S bacterial-type ferredoxin family. RnfB subfamily. In terms of assembly, the complex is composed of six subunits: RsxA, RsxB, RsxC, RsxD, RsxE and RsxG. It depends on [4Fe-4S] cluster as a cofactor.

The protein resides in the cell inner membrane. Its function is as follows. Part of a membrane-bound complex that couples electron transfer with translocation of ions across the membrane. Required to maintain the reduced state of SoxR. This chain is Ion-translocating oxidoreductase complex subunit B, found in Salmonella agona (strain SL483).